The following is a 185-amino-acid chain: Ribosome-recycling factor (185 aa).

Belongs to the RRF family.

It is found in the cytoplasm. Functionally, responsible for the release of ribosomes from messenger RNA at the termination of protein biosynthesis. May increase the efficiency of translation by recycling ribosomes from one round of translation to another. This Xanthomonas oryzae pv. oryzae (strain MAFF 311018) protein is Ribosome-recycling factor.